A 290-amino-acid chain; its full sequence is 4-diphosphocytidyl-2-C-methyl-D-erythritol kinase (290 aa).

Residue Lys20 is part of the active site. 104–114 (PMGGGLGGGSS) lines the ATP pocket. Residue Asp146 is part of the active site.

It belongs to the GHMP kinase family. IspE subfamily.

The enzyme catalyses 4-CDP-2-C-methyl-D-erythritol + ATP = 4-CDP-2-C-methyl-D-erythritol 2-phosphate + ADP + H(+). The protein operates within isoprenoid biosynthesis; isopentenyl diphosphate biosynthesis via DXP pathway; isopentenyl diphosphate from 1-deoxy-D-xylulose 5-phosphate: step 3/6. Functionally, catalyzes the phosphorylation of the position 2 hydroxy group of 4-diphosphocytidyl-2C-methyl-D-erythritol. The sequence is that of 4-diphosphocytidyl-2-C-methyl-D-erythritol kinase from Shewanella frigidimarina (strain NCIMB 400).